The chain runs to 179 residues: Acireductone dioxygenase (179 aa).

Fe(2+)-binding residues include histidine 97, histidine 99, glutamate 103, and histidine 141. Residues histidine 97, histidine 99, glutamate 103, and histidine 141 each contribute to the Ni(2+) site.

It belongs to the acireductone dioxygenase (ARD) family. Monomer. It depends on Fe(2+) as a cofactor. Requires Ni(2+) as cofactor.

It catalyses the reaction 1,2-dihydroxy-5-(methylsulfanyl)pent-1-en-3-one + O2 = 3-(methylsulfanyl)propanoate + CO + formate + 2 H(+). It carries out the reaction 1,2-dihydroxy-5-(methylsulfanyl)pent-1-en-3-one + O2 = 4-methylsulfanyl-2-oxobutanoate + formate + 2 H(+). It participates in amino-acid biosynthesis; L-methionine biosynthesis via salvage pathway; L-methionine from S-methyl-5-thio-alpha-D-ribose 1-phosphate: step 5/6. Catalyzes 2 different reactions between oxygen and the acireductone 1,2-dihydroxy-3-keto-5-methylthiopentene (DHK-MTPene) depending upon the metal bound in the active site. Fe-containing acireductone dioxygenase (Fe-ARD) produces formate and 2-keto-4-methylthiobutyrate (KMTB), the alpha-ketoacid precursor of methionine in the methionine recycle pathway. Ni-containing acireductone dioxygenase (Ni-ARD) produces methylthiopropionate, carbon monoxide and formate, and does not lie on the methionine recycle pathway. The sequence is that of Acireductone dioxygenase from Granulibacter bethesdensis (strain ATCC BAA-1260 / CGDNIH1).